A 100-amino-acid chain; its full sequence is NADH-quinone oxidoreductase subunit K 1 (100 aa).

3 helical membrane passes run 4-24, 29-49, and 60-80; these read LHSY…GVLV, IVIF…FIAL, and IFVF…LALM.

This sequence belongs to the complex I subunit 4L family. NDH-1 is composed of 14 different subunits. Subunits NuoA, H, J, K, L, M, N constitute the membrane sector of the complex.

The protein resides in the cell inner membrane. It carries out the reaction a quinone + NADH + 5 H(+)(in) = a quinol + NAD(+) + 4 H(+)(out). Its function is as follows. NDH-1 shuttles electrons from NADH, via FMN and iron-sulfur (Fe-S) centers, to quinones in the respiratory chain. The immediate electron acceptor for the enzyme in this species is believed to be ubiquinone. Couples the redox reaction to proton translocation (for every two electrons transferred, four hydrogen ions are translocated across the cytoplasmic membrane), and thus conserves the redox energy in a proton gradient. This Geobacter sulfurreducens (strain ATCC 51573 / DSM 12127 / PCA) protein is NADH-quinone oxidoreductase subunit K 1.